Consider the following 238-residue polypeptide: Orotidine 5'-phosphate decarboxylase (238 aa).

Substrate-binding positions include D11, K32, 59-68, T123, R185, Q194, G214, and R215; that span reads DLKFHDIPNT. Residue K61 is the Proton donor of the active site.

Belongs to the OMP decarboxylase family. Type 1 subfamily. As to quaternary structure, homodimer.

The catalysed reaction is orotidine 5'-phosphate + H(+) = UMP + CO2. It participates in pyrimidine metabolism; UMP biosynthesis via de novo pathway; UMP from orotate: step 2/2. In terms of biological role, catalyzes the decarboxylation of orotidine 5'-monophosphate (OMP) to uridine 5'-monophosphate (UMP). This is Orotidine 5'-phosphate decarboxylase from Nostoc sp. (strain PCC 7120 / SAG 25.82 / UTEX 2576).